A 439-amino-acid polypeptide reads, in one-letter code: Protein ABHD8 (439 aa).

Disordered regions lie at residues 49-70 (AGPA…AAQG) and 124-156 (PAGS…RPKR). The segment covering 136-145 (AGSGSGSGSG) has biased composition (gly residues). Residues 146–156 (GRRRRARRPKR) show a composition bias toward basic residues. Residues 177–279 (VLFFIHGVGG…HKVIMINGGG (103 aa)) form the AB hydrolase-1 domain. Residues Ser-252, Asp-370, and His-398 each act as charge relay system in the active site.

Belongs to the AB hydrolase superfamily. In terms of assembly, interacts with NLRP3 (via NACHT and LLR domains); this interaction is enhanced in the presence of NLRP3 inflammasome inducers, such as ATP, nigericin, silica, or alum. Interacts with ZDHHC12. (Microbial infection) Interacts with SARS-CoV-2 nucleoprotein N; this interaction disrupts the NLRP3-ABHD8 association, enhancing NLRP3 stability, ultimately leading to increased inflammasome activation.

Its subcellular location is the cytoplasm. Its function is as follows. Negatively regulates NLRP3-driven inflammation. Promotes NLRP3 degradation through the chaperone-mediated autophagy (CMA) pathway, hence attenuating inflammasome activation and IL1B secretion. Acts by recruiting palmitoyltransferase ZDHHC12 to NLRP3, facilitating NLRP3 palmitoylation and subsequent degradation. The chain is Protein ABHD8 from Homo sapiens (Human).